A 438-amino-acid polypeptide reads, in one-letter code: Cell division cycle-associated 7-like protein (438 aa).

The Integrase domain-binding motif 1 (IBM1) signature appears at 9–33 (IPKEVADIFNAPSDDEEFVGFQDDV). Serine 21 carries the post-translational modification Phosphoserine. The PSIP1-binding stretch occupies residues 55 to 114 (ACLHSKYFTEELRRIFKEDTDSDNEDFEGFTESELNIGSNPELIESELSDGDKTHPMMSD). Residues 62–88 (FTEELRRIFKEDTDSDNEDFEGFTESE) carry the Integrase domain-binding motif 2 (IBM2) motif. Residues 72 to 199 (EDTDSDNEDF…ESRAESQETS (128 aa)) form a disordered region. Threonine 74 bears the Phosphothreonine mark. Residues 74 to 85 (TDSDNEDFEGFT) are compositionally biased toward acidic residues. Serine 76 carries the phosphoserine modification. Phosphothreonine is present on threonine 85. Phosphoserine is present on residues serine 100, serine 103, serine 113, serine 135, serine 136, serine 183, and serine 185. Residues 113 to 123 (SDEEDDDDEEE) are compositionally biased toward acidic residues. A compositionally biased stretch (basic and acidic residues) spans 166 to 183 (TDLRREKSCRQPKEKEDS). An MYC-binding region spans residues 201–223 (ALLKRAMNIKENKAMLAQLLAEL). Glycyl lysine isopeptide (Lys-Gly) (interchain with G-Cter in SUMO2) cross-links involve residues lysine 210 and lysine 213. The residue at position 249 (serine 249) is a Phosphoserine.

Interacts with MYC. Interacts (via IBM motifs) with PSIP1 (via IBD domain); phosphorylation increases its affinity for PSIP1. Phosphorylation increases its interaction with PSIP1.

It is found in the cytoplasm. Its subcellular location is the nucleus. Its function is as follows. Plays a role in transcriptional regulation as a repressor that inhibits monoamine oxidase A (MAOA) activity and gene expression by binding to the promoter. Plays an important oncogenic role in mediating the full transforming effect of MYC in medulloblastoma cells. Involved in apoptotic signaling pathways; May act downstream of P38-kinase and BCL-2, but upstream of CASP3/caspase-3 as well as CCND1/cyclin D1 and E2F1. This is Cell division cycle-associated 7-like protein (Cdca7l) from Rattus norvegicus (Rat).